The primary structure comprises 251 residues: NADPH-dependent oxidoreductase (251 aa).

Belongs to the flavin oxidoreductase frp family. The cofactor is FMN.

Its function is as follows. Reduces FMN, organic nitro compounds and disulfide DTNB. Involved in maintenance of the cellular redox state and the disulfide stress response. In Staphylococcus aureus (strain MSSA476), this protein is NADPH-dependent oxidoreductase (nfrA).